A 439-amino-acid polypeptide reads, in one-letter code: Adenylosuccinate synthetase (439 aa).

GTP contacts are provided by residues 25–31 (GDEGKGK), 53–55 (GHT), and lysine 62. The Proton acceptor role is filled by aspartate 26. Residues aspartate 26 and glycine 53 each coordinate Mg(2+). IMP contacts are provided by residues 26–29 (DEGK) and 51–54 (NAGH). The active-site Proton donor is the histidine 54. Positions 141, 155, 232, and 247 each coordinate IMP. Threonine 307 contributes to the GTP binding site. Residue 307–313 (TTTNRPR) coordinates substrate. Arginine 311 serves as a coordination point for IMP. GTP is bound by residues arginine 313, 339-341 (KLD), and 425-427 (GVG).

Belongs to the adenylosuccinate synthetase family. Homodimer. Requires Mg(2+) as cofactor.

Its subcellular location is the cytoplasm. It carries out the reaction IMP + L-aspartate + GTP = N(6)-(1,2-dicarboxyethyl)-AMP + GDP + phosphate + 2 H(+). It functions in the pathway purine metabolism; AMP biosynthesis via de novo pathway; AMP from IMP: step 1/2. Functionally, plays an important role in the salvage pathway for purine nucleotide biosynthesis. Catalyzes the first committed step in the biosynthesis of AMP from IMP. The protein is Adenylosuccinate synthetase of Plasmodium yoelii yoelii.